Here is a 190-residue protein sequence, read N- to C-terminus: Shikimate kinase (190 aa).

ATP is bound at residue 19–24; that stretch reads GSGKTT. T23 provides a ligand contact to Mg(2+). Substrate contacts are provided by D41, R65, and G87. R124 provides a ligand contact to ATP. R143 contacts substrate.

The protein belongs to the shikimate kinase family. In terms of assembly, monomer. Mg(2+) serves as cofactor.

It localises to the cytoplasm. It carries out the reaction shikimate + ATP = 3-phosphoshikimate + ADP + H(+). Its pathway is metabolic intermediate biosynthesis; chorismate biosynthesis; chorismate from D-erythrose 4-phosphate and phosphoenolpyruvate: step 5/7. Functionally, catalyzes the specific phosphorylation of the 3-hydroxyl group of shikimic acid using ATP as a cosubstrate. In Synechococcus sp. (strain ATCC 27144 / PCC 6301 / SAUG 1402/1) (Anacystis nidulans), this protein is Shikimate kinase.